The sequence spans 735 residues: Ion-translocating oxidoreductase complex subunit C (735 aa).

4Fe-4S ferredoxin-type domains follow at residues 368–397 and 407–436; these read MGAPQEEKSCIRCSACADACPADLLPQQLY and KATAHHIADCIECGACAWVCPSNIPLVQYF. Positions 377, 380, 383, 387, 416, 419, 422, and 426 each coordinate [4Fe-4S] cluster. Positions 534–716 are disordered; it reads QARAKQAAHP…ADPRKAAVAA (183 aa).

This sequence belongs to the 4Fe4S bacterial-type ferredoxin family. RnfC subfamily. The complex is composed of six subunits: RsxA, RsxB, RsxC, RsxD, RsxE and RsxG. [4Fe-4S] cluster is required as a cofactor.

The protein localises to the cell inner membrane. In terms of biological role, part of a membrane-bound complex that couples electron transfer with translocation of ions across the membrane. Required to maintain the reduced state of SoxR. This is Ion-translocating oxidoreductase complex subunit C from Salmonella agona (strain SL483).